The primary structure comprises 123 residues: Fluoride-specific ion channel FluC 2 (123 aa).

A run of 3 helical transmembrane segments spans residues Phe-30–Gly-50, Val-68–Leu-88, and Trp-93–Val-113. Gly-72 and Thr-75 together coordinate Na(+).

This sequence belongs to the fluoride channel Fluc/FEX (TC 1.A.43) family.

The protein localises to the cell membrane. It catalyses the reaction fluoride(in) = fluoride(out). Its activity is regulated as follows. Na(+) is not transported, but it plays an essential structural role and its presence is essential for fluoride channel function. Functionally, fluoride-specific ion channel. Important for reducing fluoride concentration in the cell, thus reducing its toxicity. This is Fluoride-specific ion channel FluC 2 from Symbiobacterium thermophilum (strain DSM 24528 / JCM 14929 / IAM 14863 / T).